The chain runs to 72 residues: Translation initiation factor IF-1 (72 aa).

The region spanning 1–72 is the S1-like domain; sequence MSKDDCIEFE…TKGRIIYRMK (72 aa).

Belongs to the IF-1 family. In terms of assembly, component of the 30S ribosomal translation pre-initiation complex which assembles on the 30S ribosome in the order IF-2 and IF-3, IF-1 and N-formylmethionyl-tRNA(fMet); mRNA recruitment can occur at any time during PIC assembly.

It localises to the cytoplasm. Functionally, one of the essential components for the initiation of protein synthesis. Stabilizes the binding of IF-2 and IF-3 on the 30S subunit to which N-formylmethionyl-tRNA(fMet) subsequently binds. Helps modulate mRNA selection, yielding the 30S pre-initiation complex (PIC). Upon addition of the 50S ribosomal subunit IF-1, IF-2 and IF-3 are released leaving the mature 70S translation initiation complex. The protein is Translation initiation factor IF-1 of Xylella fastidiosa (strain Temecula1 / ATCC 700964).